The following is a 129-amino-acid chain: Small ribosomal subunit protein uS11 (129 aa).

The protein belongs to the universal ribosomal protein uS11 family. As to quaternary structure, part of the 30S ribosomal subunit. Interacts with proteins S7 and S18. Binds to IF-3.

Functionally, located on the platform of the 30S subunit, it bridges several disparate RNA helices of the 16S rRNA. Forms part of the Shine-Dalgarno cleft in the 70S ribosome. In Listeria innocua serovar 6a (strain ATCC BAA-680 / CLIP 11262), this protein is Small ribosomal subunit protein uS11.